The primary structure comprises 260 residues: UPF0246 protein Veis_4789 (260 aa).

It belongs to the UPF0246 family.

The sequence is that of UPF0246 protein Veis_4789 from Verminephrobacter eiseniae (strain EF01-2).